The following is a 138-amino-acid chain: Thyrotropin subunit beta (138 aa).

An N-terminal signal peptide occupies residues 1 to 20 (MTATFLMSLLFGLAFGQTMS). Intrachain disulfides connect C22–C72, C36–C87, C39–C125, C47–C103, C51–C105, and C108–C115. N43 carries an N-linked (GlcNAc...) asparagine glycan. Residues 133-138 (LVGFPV) constitute a propeptide that is removed on maturation.

Belongs to the glycoprotein hormones subunit beta family. Heterodimer of a common alpha chain and a unique beta chain which confers biological specificity to thyrotropin, lutropin, follitropin and gonadotropin.

The protein localises to the secreted. Indispensable for the control of thyroid structure and metabolism. This is Thyrotropin subunit beta (TSHB) from Monodelphis domestica (Gray short-tailed opossum).